The chain runs to 774 residues: Polyribonucleotide nucleotidyltransferase (774 aa).

2 residues coordinate Mg(2+): D485 and D491. One can recognise a KH domain in the interval 552 to 611 (PRIETMSVPKDKIRDIIGTGGKIIREIVATTGAKVDIDDDGTVKISSSDTAQIEAARNWI). The 69-residue stretch at 621–689 (GKIYTGKVVN…NRGKVRLSMR (69 aa)) folds into the S1 motif domain. The tract at residues 689–774 (RVVDQETGEE…APAFLTRDDD (86 aa)) is disordered. Residues 700-755 (PDTRPPREERPRGDRGDRGDRGPRRDGDRRREGGDRGPRRDRGDRGDRPRRERSEG) show a composition bias toward basic and acidic residues.

This sequence belongs to the polyribonucleotide nucleotidyltransferase family. Mg(2+) is required as a cofactor.

It localises to the cytoplasm. The catalysed reaction is RNA(n+1) + phosphate = RNA(n) + a ribonucleoside 5'-diphosphate. Functionally, involved in mRNA degradation. Catalyzes the phosphorolysis of single-stranded polyribonucleotides processively in the 3'- to 5'-direction. The sequence is that of Polyribonucleotide nucleotidyltransferase from Rhizorhabdus wittichii (strain DSM 6014 / CCUG 31198 / JCM 15750 / NBRC 105917 / EY 4224 / RW1) (Sphingomonas wittichii).